A 287-amino-acid polypeptide reads, in one-letter code: MAVTTASTAPPLPNLSSISAIGSWAEAVEQETLGGAHESTKDGIKIVTDIISDDTGKYKVVTTFKVVTKKVSRPIAERKKWKKFGQCKNDGPGPHVSTTYVAEEVLMQFIRNRAGEQQLDIGDEGTKVATTTGGSFTHCRYCKSDEHWSVSCPYKSMYAKDDEEDLESKEKDTKLGPTVPGSGKYVAPGMRGDRPAVTGGAERRSEENTCRVTNLPEECDEMELRALFGTVGTVNRVFIAKDKHTNKPKGFAFVTFEHRSQTEAAIQKLNGYKLDHLVLKVEWTRFV.

Positions 163–207 are disordered; the sequence is EEDLESKEKDTKLGPTVPGSGKYVAPGMRGDRPAVTGGAERRSEE. Residues 208-286 form the RRM domain; that stretch reads NTCRVTNLPE…LVLKVEWTRF (79 aa).

The protein belongs to the eIF-3 subunit G family. Component of the eukaryotic translation initiation factor 3 (eIF-3) complex.

It is found in the cytoplasm. Functionally, RNA-binding component of the eukaryotic translation initiation factor 3 (eIF-3) complex, which is involved in protein synthesis of a specialized repertoire of mRNAs and, together with other initiation factors, stimulates binding of mRNA and methionyl-tRNAi to the 40S ribosome. The eIF-3 complex specifically targets and initiates translation of a subset of mRNAs involved in cell proliferation. This subunit can bind 18S rRNA. In Brugia malayi (Filarial nematode worm), this protein is Eukaryotic translation initiation factor 3 subunit G.